A 341-amino-acid polypeptide reads, in one-letter code: GTPase Obg (341 aa).

In terms of domain architecture, Obg spans 1–159 (MKFLDQAKIY…RTIWLRLKLI (159 aa)). The region spanning 160–327 (ADAGLVGLPN…TLRQLARIID (168 aa)) is the OBG-type G domain. GTP is bound by residues 166–173 (GLPNAGKS), 191–195 (FTTLH), 212–215 (DIPG), 279–282 (SQVD), and 308–310 (SAV). Residues Ser-173 and Thr-193 each contribute to the Mg(2+) site.

Belongs to the TRAFAC class OBG-HflX-like GTPase superfamily. OBG GTPase family. As to quaternary structure, monomer. Mg(2+) serves as cofactor.

The protein localises to the cytoplasm. Its function is as follows. An essential GTPase which binds GTP, GDP and possibly (p)ppGpp with moderate affinity, with high nucleotide exchange rates and a fairly low GTP hydrolysis rate. Plays a role in control of the cell cycle, stress response, ribosome biogenesis and in those bacteria that undergo differentiation, in morphogenesis control. In Brucella abortus biovar 1 (strain 9-941), this protein is GTPase Obg.